Consider the following 186-residue polypeptide: CRS2-like protein, chloroplastic (186 aa).

The transit peptide at 1-49 (MAMTAASVFGSGGCLELLTSSKAMRGKLWTRLAPFISKRHASTSQTSLS) directs the protein to the chloroplast. Tyrosine 73 is a binding site for tRNA. Histidine 78 serves as the catalytic Proton acceptor. TRNA-binding residues include tyrosine 123, asparagine 125, and asparagine 171.

It belongs to the PTH family.

Its subcellular location is the plastid. The protein localises to the chloroplast. The polypeptide is CRS2-like protein, chloroplastic (Oryza sativa subsp. japonica (Rice)).